The chain runs to 54 residues: Large ribosomal subunit protein bL33B (54 aa).

The protein belongs to the bacterial ribosomal protein bL33 family.

This is Large ribosomal subunit protein bL33B from Mycobacterium sp. (strain JLS).